A 244-amino-acid polypeptide reads, in one-letter code: Acetoacetate decarboxylase (244 aa).

Lys-115 functions as the Schiff-base intermediate with acetoacetate in the catalytic mechanism.

It belongs to the ADC family. Homododecamer.

It catalyses the reaction acetoacetate + H(+) = acetone + CO2. In terms of biological role, catalyzes the conversion of acetoacetate to acetone and carbon dioxide. The sequence is that of Acetoacetate decarboxylase from Clostridium acetobutylicum (strain ATCC 824 / DSM 792 / JCM 1419 / IAM 19013 / LMG 5710 / NBRC 13948 / NRRL B-527 / VKM B-1787 / 2291 / W).